Reading from the N-terminus, the 822-residue chain is Probable phosphoketolase (822 aa).

The protein belongs to the XFP family. It depends on thiamine diphosphate as a cofactor.

The polypeptide is Probable phosphoketolase (Lactococcus lactis subsp. lactis (strain IL1403) (Streptococcus lactis)).